The sequence spans 125 residues: MARVKRGTTTRAKHNRILDQAKGYYGRRKNTIRIARQAVEKAGQYAYRDRKVKKRSFRALWIQRINAAVRAEGLTYGVFMYGLKLAGLDLDRKVLADLAMNESAAFGAIIAQVKSALPEGARVAA.

Belongs to the bacterial ribosomal protein bL20 family.

Functionally, binds directly to 23S ribosomal RNA and is necessary for the in vitro assembly process of the 50S ribosomal subunit. It is not involved in the protein synthesizing functions of that subunit. This chain is Large ribosomal subunit protein bL20, found in Zymomonas mobilis subsp. mobilis (strain ATCC 31821 / ZM4 / CP4).